Reading from the N-terminus, the 491-residue chain is Adenylosuccinate synthetase, chloroplastic (491 aa).

Residues 78-84 (GDEGKGK) and 106-108 (GHT) contribute to the GTP site. Asp-79 acts as the Proton acceptor in catalysis. Positions 79 and 106 each coordinate Mg(2+). IMP-binding positions include 79-82 (DEGK), 104-107 (NAGH), Thr-196, Arg-210, Gln-290, Thr-305, and Arg-369. His-107 serves as the catalytic Proton donor. 365–371 (TTTGRPR) contributes to the substrate binding site. GTP is bound by residues Arg-371, 397–399 (KLD), and 480–482 (GIG).

The protein belongs to the adenylosuccinate synthetase family. In terms of assembly, homodimer. Mg(2+) serves as cofactor.

The protein localises to the plastid. The protein resides in the chloroplast. The catalysed reaction is IMP + L-aspartate + GTP = N(6)-(1,2-dicarboxyethyl)-AMP + GDP + phosphate + 2 H(+). Its pathway is purine metabolism; AMP biosynthesis via de novo pathway; AMP from IMP: step 1/2. Functionally, plays an important role in the de novo pathway and in the salvage pathway of purine nucleotide biosynthesis. Catalyzes the first committed step in the biosynthesis of AMP from IMP. The chain is Adenylosuccinate synthetase, chloroplastic from Populus trichocarpa (Western balsam poplar).